Reading from the N-terminus, the 1196-residue chain is DNA-directed RNA polymerase subunit 2 (1196 aa).

Positions 1074–1095 (SRARGPTQLLTRQAPEGRSRDG) are disordered. The C4-type zinc-finger motif lies at 1133–1154 (CDSCGQFAHKVPEKKYYTCTGC).

This sequence belongs to the RNA polymerase beta chain family.

The protein resides in the virion. The enzyme catalyses RNA(n) + a ribonucleoside 5'-triphosphate = RNA(n+1) + diphosphate. In terms of biological role, DNA-dependent RNA polymerase catalyzes the transcription of DNA into RNA using the four ribonucleoside triphosphates as substrates. This Acanthamoeba polyphaga mimivirus (APMV) protein is DNA-directed RNA polymerase subunit 2 (RPO2).